The following is a 117-amino-acid chain: Non-specific lipid-transfer protein 3 (117 aa).

Positions 1-25 are cleaved as a signal peptide; sequence MAGLVKLSCLVLACMIVAGPIATNA. Intrachain disulfides connect Cys-29–Cys-76, Cys-39–Cys-53, Cys-54–Cys-99, and Cys-74–Cys-113.

It belongs to the plant LTP family.

Its function is as follows. Plant non-specific lipid-transfer proteins transfer phospholipids as well as galactolipids across membranes. May play a role in wax or cutin deposition in the cell walls of expanding epidermal cells and certain secretory tissues. In Brassica napus (Rape), this protein is Non-specific lipid-transfer protein 3 (LTP3).